Here is a 127-residue protein sequence, read N- to C-terminus: Small ribosomal subunit protein uS11 (127 aa).

It belongs to the universal ribosomal protein uS11 family. In terms of assembly, part of the 30S ribosomal subunit. Interacts with proteins S7 and S18. Binds to IF-3.

Its function is as follows. Located on the platform of the 30S subunit, it bridges several disparate RNA helices of the 16S rRNA. Forms part of the Shine-Dalgarno cleft in the 70S ribosome. This chain is Small ribosomal subunit protein uS11, found in Lactococcus lactis subsp. lactis (strain IL1403) (Streptococcus lactis).